The following is a 565-amino-acid chain: Periplasmic trehalase (565 aa).

Positions 1–30 (MKSPAPSRPQKMALIPACIFLCFAALSVQA) are cleaved as a signal peptide. Substrate contacts are provided by residues R152, 159 to 160 (WD), N196, 205 to 207 (RSQ), 277 to 279 (RPE), and G310. Active-site proton donor/acceptor residues include D312 and E496. E511 contacts substrate. The disordered stretch occupies residues 540–565 (DNVPATHPTVKSATTQPSTKEAQPTP). The segment covering 548-565 (TVKSATTQPSTKEAQPTP) has biased composition (polar residues).

Belongs to the glycosyl hydrolase 37 family. In terms of assembly, monomer.

Its subcellular location is the periplasm. It catalyses the reaction alpha,alpha-trehalose + H2O = alpha-D-glucose + beta-D-glucose. Functionally, provides the cells with the ability to utilize trehalose at high osmolarity by splitting it into glucose molecules that can subsequently be taken up by the phosphotransferase-mediated uptake system. This is Periplasmic trehalase from Shigella flexneri.